We begin with the raw amino-acid sequence, 499 residues long: Potassium channel subfamily K member 5 (499 aa).

Residues 1 to 7 (MVDRGPL) lie on the Cytoplasmic side of the membrane. A helical transmembrane segment spans residues 8–26 (LTSAIIFYLAIGAAIFEVL). N-linked (GlcNAc...) asparagine glycosylation occurs at asparagine 77. Positions 85–112 (WPNAMIFAATVITTIGYGNVAPKTPAGR) form an intramembrane region, pore-forming. K(+) is bound by residues threonine 98, isoleucine 99, glycine 100, and tyrosine 101. The segment at 98–103 (TIGYGN) is selectivity filter 1. The helical transmembrane segment at 113–133 (LFCVFYGLFGVPLCLTWISAL) threads the bilayer. The Cytoplasmic portion of the chain corresponds to 134–157 (GKFFGGRAKRLGQFLTKRGVSLRK). A helical membrane pass occupies residues 158 to 180 (AQITCTVIFIVWGVLVHLVIPPF). The pore-forming intramembrane region spans 190 to 215 (YIEGLYYSFITISTIGFGDFVAGVNP). Positions 203, 204, 205, and 206 each coordinate K(+). Positions 203-208 (TIGFGD) are selectivity filter 2. Residues 230–250 (WIYLGLAWLSLFVNWKVSMFV) form a helical membrane-spanning segment. The Cytoplasmic segment spans residues 251–325 (EVHKAIKKRR…SGGGETGPGP (75 aa)). Disordered regions lie at residues 312–335 (AMKTSGGGETGPGPGLGPQGGGLP), 360–388 (QTLRSKGHVSRSPDEEAVARAPEDSSPAP), and 428–499 (GLSD…PKGT). Positions 316 to 334 (SGGGETGPGPGLGPQGGGL) are enriched in gly residues. Residues 370 to 382 (RSPDEEAVARAPE) are compositionally biased toward basic and acidic residues. Serine 371 carries the phosphoserine modification. A compositionally biased stretch (low complexity) spans 466–480 (SSSESTFTSTESELS).

It belongs to the two pore domain potassium channel (TC 1.A.1.8) family. In terms of assembly, homodimer; disulfide-linked. Heterodimer with KCNK16 and KCNK17. In terms of tissue distribution, abundant expression in kidney, also detected in liver, placenta and small intestine. In the kidney, expression is restricted to the distal tubules and collecting ducts. Not expressed in proximal tubules or glomeruli. Expressed in pancreas, in both endocrine (alpha, beta, gamma, delta, and epsilon) and exocrine (acinar and ductal) cells.

It localises to the membrane. It catalyses the reaction K(+)(in) = K(+)(out). With respect to regulation, the channel conductance is stimulated by extracellular alkaline pH. Inhibited by quinine, quinidine and external acidification. In terms of biological role, k(+) channel that conducts voltage-dependent outward rectifying currents upon membrane depolarization. Voltage sensing is coupled to K(+) electrochemical gradient in an 'ion flux gating' mode where outward but not inward ion flow opens the gate. Homo- and heterodimerizes to form functional channels with distinct regulatory and gating properties. In Homo sapiens (Human), this protein is Potassium channel subfamily K member 5.